A 91-amino-acid chain; its full sequence is DNA-directed RNA polymerase subunit omega (91 aa).

Belongs to the RNA polymerase subunit omega family. In terms of assembly, the RNAP catalytic core consists of 2 alpha, 1 beta, 1 beta' and 1 omega subunit. When a sigma factor is associated with the core the holoenzyme is formed, which can initiate transcription.

It carries out the reaction RNA(n) + a ribonucleoside 5'-triphosphate = RNA(n+1) + diphosphate. Its function is as follows. Promotes RNA polymerase assembly. Latches the N- and C-terminal regions of the beta' subunit thereby facilitating its interaction with the beta and alpha subunits. This Yersinia enterocolitica serotype O:8 / biotype 1B (strain NCTC 13174 / 8081) protein is DNA-directed RNA polymerase subunit omega.